The following is a 216-amino-acid chain: Peroxiredoxin (216 aa).

Residues 2–158 (IVIGEKFPEV…ILRLVKALKI (157 aa)) enclose the Thioredoxin domain. Residue cysteine 46 is the Cysteine sulfenic acid (-SOH) intermediate of the active site. Residue arginine 121 participates in substrate binding. Cysteine 205 and cysteine 211 are oxidised to a cystine.

This sequence belongs to the peroxiredoxin family. Prx6 subfamily. Homodecamer. Pentamer of dimers that assemble into a ring structure.

It is found in the cytoplasm. The catalysed reaction is a hydroperoxide + [thioredoxin]-dithiol = an alcohol + [thioredoxin]-disulfide + H2O. Its function is as follows. Thiol-specific peroxidase that catalyzes the reduction of hydrogen peroxide and organic hydroperoxides to water and alcohols, respectively. Plays a role in cell protection against oxidative stress by detoxifying peroxides. This chain is Peroxiredoxin, found in Pyrococcus furiosus (strain ATCC 43587 / DSM 3638 / JCM 8422 / Vc1).